A 137-amino-acid polypeptide reads, in one-letter code: Proofreading thioesterase EntH (137 aa).

Glu-63 acts as the Nucleophile or proton acceptor in catalysis.

It belongs to the thioesterase PaaI family. Homotetramer. Dimer of dimers. Interacts specifically with the aryl carrier protein (ArCP) domain of EntB.

It localises to the cytoplasm. The protein operates within siderophore biosynthesis; enterobactin biosynthesis. Required for optimal enterobactin synthesis. Acts as a proofreading enzyme that prevents EntB misacylation by hydrolyzing the thioester bound existing between EntB and wrongly charged molecules. This chain is Proofreading thioesterase EntH, found in Cronobacter turicensis (strain DSM 18703 / CCUG 55852 / LMG 23827 / z3032).